We begin with the raw amino-acid sequence, 354 residues long: N-acetyl-gamma-glutamyl-phosphate reductase (354 aa).

The active site involves Cys-156.

It belongs to the NAGSA dehydrogenase family. Type 1 subfamily.

The protein resides in the cytoplasm. The catalysed reaction is N-acetyl-L-glutamate 5-semialdehyde + phosphate + NADP(+) = N-acetyl-L-glutamyl 5-phosphate + NADPH + H(+). It participates in amino-acid biosynthesis; L-arginine biosynthesis; N(2)-acetyl-L-ornithine from L-glutamate: step 3/4. Functionally, catalyzes the NADPH-dependent reduction of N-acetyl-5-glutamyl phosphate to yield N-acetyl-L-glutamate 5-semialdehyde. The protein is N-acetyl-gamma-glutamyl-phosphate reductase of Bordetella pertussis (strain Tohama I / ATCC BAA-589 / NCTC 13251).